A 502-amino-acid polypeptide reads, in one-letter code: 4,4'-diapophytoene desaturase (4,4'-diaponeurosporene-forming) (502 aa).

Residue 5–17 (VIGAGVTGLAAAA) participates in FAD binding.

This sequence belongs to the carotenoid/retinoid oxidoreductase family. CrtN subfamily.

It carries out the reaction 15-cis-4,4'-diapophytoene + 3 FAD + 3 H(+) = all-trans-4,4'-diaponeurosporene + 3 FADH2. It functions in the pathway carotenoid biosynthesis; staphyloxanthin biosynthesis; staphyloxanthin from farnesyl diphosphate: step 2/5. Involved in the biosynthesis of the yellow-orange carotenoid staphyloxanthin, which plays a role in the virulence via its protective function against oxidative stress. Catalyzes three successive dehydrogenation reactions that lead to the introduction of three double bonds into 4,4'-diapophytoene (dehydrosqualene), with 4,4'-diapophytofluene and 4,4'-diapo-zeta-carotene as intermediates, and 4,4'-diaponeurosporene (the major deep-yellow pigment in staphylococci strains) as the end product. The sequence is that of 4,4'-diapophytoene desaturase (4,4'-diaponeurosporene-forming) from Staphylococcus aureus (strain MW2).